Reading from the N-terminus, the 532-residue chain is Arginine--tRNA ligase (532 aa).

The 'HIGH' region motif lies at A122 to S132.

It belongs to the class-I aminoacyl-tRNA synthetase family. As to quaternary structure, monomer.

The protein resides in the cytoplasm. The enzyme catalyses tRNA(Arg) + L-arginine + ATP = L-arginyl-tRNA(Arg) + AMP + diphosphate. In Elusimicrobium minutum (strain Pei191), this protein is Arginine--tRNA ligase.